Here is a 430-residue protein sequence, read N- to C-terminus: Ribosomal protein uS12 methylthiotransferase RimO (430 aa).

An MTTase N-terminal domain is found at 1-116 (MRVGIKVLGC…IANAIENGTD (116 aa)). 6 residues coordinate [4Fe-4S] cluster: Cys10, Cys46, Cys79, Cys148, Cys152, and Cys155. Residues 134-365 (LEERPYAYVK…LLQAEISNSR (232 aa)) form the Radical SAM core domain. The TRAM domain maps to 367-430 (DRFVGKKLKF…DEYDMWGSVI (64 aa)).

The protein belongs to the methylthiotransferase family. RimO subfamily. Requires [4Fe-4S] cluster as cofactor.

It localises to the cytoplasm. The catalysed reaction is L-aspartate(89)-[ribosomal protein uS12]-hydrogen + (sulfur carrier)-SH + AH2 + 2 S-adenosyl-L-methionine = 3-methylsulfanyl-L-aspartate(89)-[ribosomal protein uS12]-hydrogen + (sulfur carrier)-H + 5'-deoxyadenosine + L-methionine + A + S-adenosyl-L-homocysteine + 2 H(+). Functionally, catalyzes the methylthiolation of an aspartic acid residue of ribosomal protein uS12. The polypeptide is Ribosomal protein uS12 methylthiotransferase RimO (Thermotoga petrophila (strain ATCC BAA-488 / DSM 13995 / JCM 10881 / RKU-1)).